The sequence spans 398 residues: ATP-dependent RNA helicase eIF4A (398 aa).

The Q motif signature appears at 25 to 53 (DSFDSMELKPELLRGIYAYGFERPSAIQQ). Positions 56 to 226 (ILPIIKGNDV…TKFMRDPVRI (171 aa)) constitute a Helicase ATP-binding domain. An ATP-binding site is contributed by 69–76 (AQSGTGKT). The DEAD box motif lies at 174 to 177 (DEAD). The Helicase C-terminal domain maps to 237-398 (GIKQFYIAVE…EMPMNVADLI (162 aa)).

It belongs to the DEAD box helicase family. eIF4A subfamily. Component of the eIF4F complex, which composition varies with external and internal environmental conditions. It is composed of at least eIF4A, eIF4E and eIF4G.

The protein resides in the cytoplasm. It catalyses the reaction ATP + H2O = ADP + phosphate + H(+). ATP-dependent RNA helicase which is a subunit of the eIF4F complex involved in cap recognition and is required for mRNA binding to ribosome. In the current model of translation initiation, eIF4A unwinds RNA secondary structures in the 5'-UTR of mRNAs which is necessary to allow efficient binding of the small ribosomal subunit, and subsequent scanning for the initiator codon. The chain is ATP-dependent RNA helicase eIF4A (tif1) from Neosartorya fischeri (strain ATCC 1020 / DSM 3700 / CBS 544.65 / FGSC A1164 / JCM 1740 / NRRL 181 / WB 181) (Aspergillus fischerianus).